The chain runs to 274 residues: NAD(P)H-quinone oxidoreductase subunit K, chloroplastic (274 aa).

Composition is skewed to polar residues over residues Met1–Ser10 and Ser18–Asp27. The tract at residues Met1 to Asp27 is disordered. [4Fe-4S] cluster is bound by residues Cys90, Cys91, Cys155, and Cys186.

Belongs to the complex I 20 kDa subunit family. In terms of assembly, NDH is composed of at least 16 different subunits, 5 of which are encoded in the nucleus. Requires [4Fe-4S] cluster as cofactor.

The protein localises to the plastid. It localises to the chloroplast thylakoid membrane. The enzyme catalyses a plastoquinone + NADH + (n+1) H(+)(in) = a plastoquinol + NAD(+) + n H(+)(out). It carries out the reaction a plastoquinone + NADPH + (n+1) H(+)(in) = a plastoquinol + NADP(+) + n H(+)(out). In terms of biological role, NDH shuttles electrons from NAD(P)H:plastoquinone, via FMN and iron-sulfur (Fe-S) centers, to quinones in the photosynthetic chain and possibly in a chloroplast respiratory chain. The immediate electron acceptor for the enzyme in this species is believed to be plastoquinone. Couples the redox reaction to proton translocation, and thus conserves the redox energy in a proton gradient. The chain is NAD(P)H-quinone oxidoreductase subunit K, chloroplastic from Chlorokybus atmophyticus (Soil alga).